A 78-amino-acid chain; its full sequence is cAMP-dependent protein kinase inhibitor beta (78 aa).

Residues 1-10 show a composition bias toward basic and acidic residues; that stretch reads MRTDSSKMTD. The interval 1 to 78 is disordered; that stretch reads MRTDSSKMTD…QLEKPQNEEK (78 aa). A compositionally biased stretch (polar residues) spans 33–42; that stretch reads IQSSAATDGT. A compositionally biased stretch (basic and acidic residues) spans 53-78; it reads SVKEDAKEKDEKTTQDQLEKPQNEEK.

It belongs to the PKI family.

Extremely potent competitive inhibitor of cAMP-dependent protein kinase activity, this protein interacts with the catalytic subunit of the enzyme after the cAMP-induced dissociation of its regulatory chains. The polypeptide is cAMP-dependent protein kinase inhibitor beta (PKIB) (Homo sapiens (Human)).